Reading from the N-terminus, the 259-residue chain is Ubiquitin-conjugating enzyme E2 J2 (259 aa).

At 1–226 the chain is on the cytoplasmic side; the sequence is MSSNSVKRAP…AGLQQANRHH (226 aa). Residues 12 to 162 form the UBC core domain; that stretch reads TATQRLKQDY…DKVFCELFPE (151 aa). C94 (glycyl thioester intermediate) is an active-site residue. The interval 174–200 is disordered; it reads QDELSSRPQALPLPDVVPDGETHHGQH. A helical; Anchor for type IV membrane protein transmembrane segment spans residues 227 to 247; that stretch reads GLLGGALANLFVIVGFAAFAY. Topologically, residues 248–259 are lumenal; that stretch reads TVKYVLRSIAQE.

It belongs to the ubiquitin-conjugating enzyme family.

Its subcellular location is the endoplasmic reticulum membrane. The catalysed reaction is S-ubiquitinyl-[E1 ubiquitin-activating enzyme]-L-cysteine + [E2 ubiquitin-conjugating enzyme]-L-cysteine = [E1 ubiquitin-activating enzyme]-L-cysteine + S-ubiquitinyl-[E2 ubiquitin-conjugating enzyme]-L-cysteine.. It functions in the pathway protein modification; protein ubiquitination. Functionally, catalyzes the covalent attachment of ubiquitin to other proteins. Seems to function in the selective degradation of misfolded membrane proteins from the endoplasmic reticulum (ERAD). In cooperation with the GATOR2 complex, catalyzes 'Lys-6'-linked ubiquitination of NPRL2. This is Ubiquitin-conjugating enzyme E2 J2 (UBE2J2) from Bos taurus (Bovine).